Consider the following 503-residue polypeptide: Inosine-5'-monophosphate dehydrogenase 1 (503 aa).

S2 carries the post-translational modification N-acetylserine. The CBS domain maps to 167-225 (MKSCDSSDYCVPWEIDFEKLEFVLEDKQKGFVVLERDGETVNVVTKDDIQRVKGYPKSG). Residues 265-267 (DSS) and 315-317 (GMG) contribute to the NAD(+) site. G317 and G319 together coordinate K(+). Position 320 (S320) interacts with IMP. K(+) is bound at residue C322. C322 functions as the Thioimidate intermediate in the catalytic mechanism. IMP-binding positions include 355-357 (DGG), 378-379 (GS), and 402-406 (YRGMG). Catalysis depends on R418, which acts as the Proton acceptor. Q430 contributes to the IMP binding site. Residues E489, G490, and G491 each coordinate K(+).

This sequence belongs to the IMPDH/GMPR family. Homotetramer. It depends on K(+) as a cofactor.

It localises to the cytoplasm. The enzyme catalyses IMP + NAD(+) + H2O = XMP + NADH + H(+). The protein operates within purine metabolism; XMP biosynthesis via de novo pathway; XMP from IMP: step 1/1. With respect to regulation, mycophenolic acid (MPA) is a non-competitive inhibitor that prevents formation of the closed enzyme conformation by binding to the same site as the amobile flap. In contrast, mizoribine monophosphate (MZP) is a competitive inhibitor that induces the closed conformation. MPA is a potent inhibitor of mammalian IMPDHs but a poor inhibitor of the bacterial enzymes. MZP is a more potent inhibitor of bacterial IMPDH. In terms of biological role, catalyzes the conversion of inosine 5'-phosphate (IMP) to xanthosine 5'-phosphate (XMP), the first committed and rate-limiting step in the de novo synthesis of guanine nucleotides, and therefore plays an important role in the regulation of cell growth. This is Inosine-5'-monophosphate dehydrogenase 1 from Arabidopsis thaliana (Mouse-ear cress).